We begin with the raw amino-acid sequence, 1006 residues long: DNA polymerase (1006 aa).

Belongs to the DNA polymerase type-B family. Interacts with OPG148. Component of the Uracil-DNA glycosylase(UDG)-OPG148-polymerase complex; OPG148 and OPG116/UDG form a heterodimeric processivity factor that associates with OPG071 to form the processive polymerase holoenzyme.

It catalyses the reaction DNA(n) + a 2'-deoxyribonucleoside 5'-triphosphate = DNA(n+1) + diphosphate. In terms of biological role, catalyzes DNA synthesis. Acquires processivity by associating with a heterodimeric processivity factor comprised of the viral OPG148 and OPG116 proteins, thereby forming the DNA polymerase holoenzyme. Displays 3'- to 5' exonuclease activity. Might participate in viral DNA recombination. Does not perform OPG116/D4synthesis across an abasic site. The sequence is that of DNA polymerase (OPG071) from Homo sapiens (Human).